The chain runs to 215 residues: Imidazole glycerol phosphate synthase subunit HisH (215 aa).

Residues 3–215 (TAVVFDYGFG…QLLKNWIATL (213 aa)) enclose the Glutamine amidotransferase type-1 domain. Cysteine 81 acts as the Nucleophile in catalysis. Residues histidine 196 and glutamate 198 contribute to the active site.

Heterodimer of HisH and HisF.

It is found in the cytoplasm. The catalysed reaction is 5-[(5-phospho-1-deoxy-D-ribulos-1-ylimino)methylamino]-1-(5-phospho-beta-D-ribosyl)imidazole-4-carboxamide + L-glutamine = D-erythro-1-(imidazol-4-yl)glycerol 3-phosphate + 5-amino-1-(5-phospho-beta-D-ribosyl)imidazole-4-carboxamide + L-glutamate + H(+). It carries out the reaction L-glutamine + H2O = L-glutamate + NH4(+). It functions in the pathway amino-acid biosynthesis; L-histidine biosynthesis; L-histidine from 5-phospho-alpha-D-ribose 1-diphosphate: step 5/9. Functionally, IGPS catalyzes the conversion of PRFAR and glutamine to IGP, AICAR and glutamate. The HisH subunit catalyzes the hydrolysis of glutamine to glutamate and ammonia as part of the synthesis of IGP and AICAR. The resulting ammonia molecule is channeled to the active site of HisF. This chain is Imidazole glycerol phosphate synthase subunit HisH, found in Bifidobacterium longum (strain NCC 2705).